A 231-amino-acid polypeptide reads, in one-letter code: Ribonuclease HII (231 aa).

The RNase H type-2 domain occupies 32–223; it reads WPVAGMDEAG…FRLGGTEVVE (192 aa). A divalent metal cation contacts are provided by aspartate 38, glutamate 39, and aspartate 130.

Belongs to the RNase HII family. It depends on Mn(2+) as a cofactor. The cofactor is Mg(2+).

The protein localises to the cytoplasm. It carries out the reaction Endonucleolytic cleavage to 5'-phosphomonoester.. Its function is as follows. Endonuclease that specifically degrades the RNA of RNA-DNA hybrids. This Mesorhizobium japonicum (strain LMG 29417 / CECT 9101 / MAFF 303099) (Mesorhizobium loti (strain MAFF 303099)) protein is Ribonuclease HII.